The primary structure comprises 425 residues: Serine--tRNA ligase (425 aa).

233-235 (TAE) is a binding site for L-serine. 264–266 (RRE) lines the ATP pocket. Residue glutamate 287 participates in L-serine binding. 351–354 (EISS) contributes to the ATP binding site. Serine 387 is a binding site for L-serine.

It belongs to the class-II aminoacyl-tRNA synthetase family. Type-1 seryl-tRNA synthetase subfamily. Homodimer. The tRNA molecule binds across the dimer.

Its subcellular location is the cytoplasm. The enzyme catalyses tRNA(Ser) + L-serine + ATP = L-seryl-tRNA(Ser) + AMP + diphosphate + H(+). It carries out the reaction tRNA(Sec) + L-serine + ATP = L-seryl-tRNA(Sec) + AMP + diphosphate + H(+). Its pathway is aminoacyl-tRNA biosynthesis; selenocysteinyl-tRNA(Sec) biosynthesis; L-seryl-tRNA(Sec) from L-serine and tRNA(Sec): step 1/1. In terms of biological role, catalyzes the attachment of serine to tRNA(Ser). Is also able to aminoacylate tRNA(Sec) with serine, to form the misacylated tRNA L-seryl-tRNA(Sec), which will be further converted into selenocysteinyl-tRNA(Sec). The sequence is that of Serine--tRNA ligase from Thermotoga neapolitana (strain ATCC 49049 / DSM 4359 / NBRC 107923 / NS-E).